A 231-amino-acid chain; its full sequence is Cytidylate kinase (231 aa).

11–19 (GHSSCGKST) contacts ATP.

Belongs to the cytidylate kinase family. Type 1 subfamily.

It is found in the cytoplasm. The catalysed reaction is CMP + ATP = CDP + ADP. It carries out the reaction dCMP + ATP = dCDP + ADP. The protein is Cytidylate kinase of Porphyromonas gingivalis (strain ATCC BAA-308 / W83).